The following is a 388-amino-acid chain: Succinate--CoA ligase [ADP-forming] subunit beta (388 aa).

The ATP-grasp domain maps to 9–244 (KQLFARYGLP…QSQEDPREAQ (236 aa)). Residues Lys-46, 53–55 (GRG), Glu-99, Thr-102, and Glu-107 each bind ATP. Asn-199 and Asp-213 together coordinate Mg(2+). Substrate is bound by residues Asn-264 and 321-323 (GIV).

Belongs to the succinate/malate CoA ligase beta subunit family. In terms of assembly, heterotetramer of two alpha and two beta subunits. Mg(2+) is required as a cofactor.

The enzyme catalyses succinate + ATP + CoA = succinyl-CoA + ADP + phosphate. It carries out the reaction GTP + succinate + CoA = succinyl-CoA + GDP + phosphate. It participates in carbohydrate metabolism; tricarboxylic acid cycle; succinate from succinyl-CoA (ligase route): step 1/1. Functionally, succinyl-CoA synthetase functions in the citric acid cycle (TCA), coupling the hydrolysis of succinyl-CoA to the synthesis of either ATP or GTP and thus represents the only step of substrate-level phosphorylation in the TCA. The beta subunit provides nucleotide specificity of the enzyme and binds the substrate succinate, while the binding sites for coenzyme A and phosphate are found in the alpha subunit. The chain is Succinate--CoA ligase [ADP-forming] subunit beta from Klebsiella pneumoniae (strain 342).